Here is a 334-residue protein sequence, read N- to C-terminus: Mitochondrial ribosome-associated GTPase 1 (334 aa).

Residues 36-209 (AKGLKKMQSS…LLDTPGVLAP (174 aa)) form the CP-type G domain. Residues 83-86 (NKMD), 153-158 (NVGKSS), and Gly-205 contribute to the GTP site.

Belongs to the TRAFAC class YlqF/YawG GTPase family. MTG1 subfamily. Associates with the mitochondrial ribosome large subunit; the association occurs in a GTP-dependent manner.

The protein resides in the mitochondrion inner membrane. Plays a role in the regulation of the mitochondrial ribosome assembly and of translational activity. Displays mitochondrial GTPase activity. This chain is Mitochondrial ribosome-associated GTPase 1 (MTG1), found in Homo sapiens (Human).